Reading from the N-terminus, the 554-residue chain is 3-(3-hydroxy-phenyl)propionate/3-hydroxycinnamic acid hydroxylase (554 aa).

FAD contacts are provided by residues 17–46 (QVAI…LVEK) and 285–295 (FRIDRVLLAGD).

It belongs to the PheA/TfdB FAD monooxygenase family. It depends on FAD as a cofactor.

The enzyme catalyses 3-(3-hydroxyphenyl)propanoate + NADH + O2 + H(+) = 3-(2,3-dihydroxyphenyl)propanoate + NAD(+) + H2O. It carries out the reaction (2E)-3-(3-hydroxyphenyl)prop-2-enoate + NADH + O2 + H(+) = (2E)-3-(2,3-dihydroxyphenyl)prop-2-enoate + NAD(+) + H2O. It functions in the pathway aromatic compound metabolism; 3-phenylpropanoate degradation. Functionally, catalyzes the insertion of one atom of molecular oxygen into position 2 of the phenyl ring of 3-(3-hydroxyphenyl)propionate (3-HPP) and hydroxycinnamic acid (3HCI). The chain is 3-(3-hydroxy-phenyl)propionate/3-hydroxycinnamic acid hydroxylase from Klebsiella pneumoniae (strain 342).